The sequence spans 172 residues: 3-hydroxydecanoyl-[acyl-carrier-protein] dehydratase (172 aa).

Residue H71 is part of the active site.

The protein belongs to the thioester dehydratase family. FabA subfamily. Homodimer.

Its subcellular location is the cytoplasm. The catalysed reaction is a (3R)-hydroxyacyl-[ACP] = a (2E)-enoyl-[ACP] + H2O. It catalyses the reaction (3R)-hydroxydecanoyl-[ACP] = (2E)-decenoyl-[ACP] + H2O. The enzyme catalyses (2E)-decenoyl-[ACP] = (3Z)-decenoyl-[ACP]. It functions in the pathway lipid metabolism; fatty acid biosynthesis. Its function is as follows. Necessary for the introduction of cis unsaturation into fatty acids. Catalyzes the dehydration of (3R)-3-hydroxydecanoyl-ACP to E-(2)-decenoyl-ACP and then its isomerization to Z-(3)-decenoyl-ACP. Can catalyze the dehydratase reaction for beta-hydroxyacyl-ACPs with saturated chain lengths up to 16:0, being most active on intermediate chain length. The chain is 3-hydroxydecanoyl-[acyl-carrier-protein] dehydratase from Blochmanniella pennsylvanica (strain BPEN).